A 363-amino-acid chain; its full sequence is Two-pore potassium channel 1 (363 aa).

The interval 1-61 (MSSDAARTPL…DDVKIDEPPP (61 aa)) is disordered. The Cytoplasmic segment spans residues 1 to 78 (MSSDAARTPL…FSDLNPNLRR (78 aa)). Positions 31-42 (SSRKRRLRRSRS) are enriched in basic residues. A helical membrane pass occupies residues 79 to 99 (VIMFLALYLTIGTLCFYLVRD). Positions 111 to 130 (DALYFCIVTMTTVGYGDLVP) form an intramembrane region, pore-forming. A helical membrane pass occupies residues 137 to 157 (LLACAFVFSGMVLVGHLLSRA). Over 158 to 197 (ADYLVEKQEALLVRAFHLRQSFGPTDILKELHTNKLRYKC) the chain is Cytoplasmic. A helical transmembrane segment spans residues 198–218 (YATCLVLVVLFIVGTIFLVMV). Positions 225 to 244 (SAFYCVCSTVTTLGYGDKSF) form an intramembrane region, pore-forming. A helical transmembrane segment spans residues 251–271 (LFAVFWILTSSICLAQFFLYV). Residues 272-363 (AELNTENKQR…LAQTTSQIQR (92 aa)) are Cytoplasmic-facing. EF-hand domains are found at residues 288–323 (LTRRITNNDLEAADLDEDGVVGAAEFIVYKLKEMGK) and 327–362 (KDISGIMDEFEQLDYDESGTLTTSDIVLAQTTSQIQ). The Endoplasmic reticulum release signal signature appears at 296–298 (DLE). 9 residues coordinate Ca(2+): aspartate 301, aspartate 303, aspartate 305, glutamate 312, aspartate 340, aspartate 342, serine 344, threonine 346, and aspartate 351.

The protein belongs to the two pore domain potassium channel (TC 1.A.1.7) family. Homodimer. Interacts with GRF1 and GRF6, but only GRF6 modulates the channel activity. In terms of processing, phosphorylation at Ser-42 increases and stabilizes the interaction with 14-3-3 proteins. As to expression, detected in mesophyll cells, guard cells and vascular tissues of the leaves. Expressed in the hilum, where the funiculus is attached during fruit maturation and in the embryo. Also expressed at a lower level in seedlings, root tips and elongation zones, and flowers. Could be detected in mitotically active tissues.

It is found in the vacuole membrane. With respect to regulation, could be activated by protein kinase C. Strongly induced by calcium. Blocked by barium, tetraethylammonium (TEA), quinine and quinidine. Voltage-independent, large conductance and potassium-selective tonoplast ion channel. Regulated by cytoplasmic calcium and pH. Does not mediate slow-vacuolar (SV) ionic currents, but essential to establish VK currents. Has some permeability for Rb(+) and NH(4)(+), but none for Na(+), Cs(+) or Li(+). Involved in intracellular K(+) redistribution and/or K(+) retranslocation between different tissues. The sequence is that of Two-pore potassium channel 1 (TPK1) from Arabidopsis thaliana (Mouse-ear cress).